The sequence spans 65 residues: Large ribosomal subunit protein uL29c (65 aa).

Belongs to the universal ribosomal protein uL29 family.

It localises to the plastid. The protein localises to the chloroplast. This chain is Large ribosomal subunit protein uL29c (rpl29), found in Guillardia theta (Cryptophyte).